A 351-amino-acid polypeptide reads, in one-letter code: S-adenosylmethionine:tRNA ribosyltransferase-isomerase (351 aa).

It belongs to the QueA family. Monomer.

The protein resides in the cytoplasm. The enzyme catalyses 7-aminomethyl-7-carbaguanosine(34) in tRNA + S-adenosyl-L-methionine = epoxyqueuosine(34) in tRNA + adenine + L-methionine + 2 H(+). The protein operates within tRNA modification; tRNA-queuosine biosynthesis. Functionally, transfers and isomerizes the ribose moiety from AdoMet to the 7-aminomethyl group of 7-deazaguanine (preQ1-tRNA) to give epoxyqueuosine (oQ-tRNA). This Fusobacterium nucleatum subsp. nucleatum (strain ATCC 25586 / DSM 15643 / BCRC 10681 / CIP 101130 / JCM 8532 / KCTC 2640 / LMG 13131 / VPI 4355) protein is S-adenosylmethionine:tRNA ribosyltransferase-isomerase.